A 261-amino-acid polypeptide reads, in one-letter code: MEPRGEKSGEADGVRVTPQLLKARSGEFALESILLLKLRGLGLVGLGCLGDCLGLEWLDLSGNALTQLGPLASLRQLAVLNVADNRLTGLEPLAACENLQCLNAAGNLLAGPAQLQCLAGLRGLERLRLRDPLARLSNPLCASPCYWASVRELLPGLKVLDGERVSGRGSDFYQLCRDLDSSLSPDPGAPGPRPMEAQPWVEPGYWEALPPRSSSILEEACRQFQDTLQECHDLDRQAWDSLAQAMRALSPAGATAASFVF.

LRR repeat units lie at residues 54–75, 76–97, and 98–119; these read GLEW…ASLR, QLAV…AACE, and NLQC…QCLA. Residues 138–183 enclose the LRRCT domain; sequence NPLCASPCYWASVRELLPGLKVLDGERVSGRGSDFYQLCRDLDSSL.

The chain is Leucine-rich repeat-containing protein 61 (LRRC61) from Bos taurus (Bovine).